The following is a 275-amino-acid chain: MSLILAVYGKGGIGKSTTTANISAALALKGAKVLQIGCDPKHDSTFPLTGTLQKTVIEALEEVDFHHEELTEEDIILTGFGGVDALEAGGPPAGSGCGGYVVGEAVKLLQELGVYDRYDVILFDVLGDVVCGGFSAPLNFADYAVIIATNDFDSIFAANRLCMAIEQKSTRYKVKLAGIVANRVDYVKGGGTNMLEQFSDKVGTKLLARVPYHELIRKSRFAGKTMFQMEDGPEKEECVKPYNEIADFLLSRNPTSSVPVPIGDRDIFEIVGGWQ.

Residues 12-17 and K41 contribute to the ATP site; that span reads GIGKST. S16 contacts Mg(2+). [4Fe-4S] cluster contacts are provided by C97 and C131. 182–183 serves as a coordination point for ATP; it reads NR.

This sequence belongs to the NifH/BchL/ChlL family. Homodimer. Protochlorophyllide reductase is composed of three subunits; BchL, BchN and BchB. [4Fe-4S] cluster is required as a cofactor.

It carries out the reaction chlorophyllide a + oxidized 2[4Fe-4S]-[ferredoxin] + 2 ADP + 2 phosphate = protochlorophyllide a + reduced 2[4Fe-4S]-[ferredoxin] + 2 ATP + 2 H2O. The protein operates within porphyrin-containing compound metabolism; bacteriochlorophyll biosynthesis (light-independent). Component of the dark-operative protochlorophyllide reductase (DPOR) that uses Mg-ATP and reduced ferredoxin to reduce ring D of protochlorophyllide (Pchlide) to form chlorophyllide a (Chlide). This reaction is light-independent. The L component serves as a unique electron donor to the NB-component of the complex, and binds Mg-ATP. In Chlorobium phaeobacteroides (strain BS1), this protein is Light-independent protochlorophyllide reductase iron-sulfur ATP-binding protein.